Consider the following 237-residue polypeptide: Lysophospholipase-like protein 1 (237 aa).

N-acetylalanine is present on Ala-2. Residues Ser-124, Asp-179, and His-211 each act as charge relay system in the active site.

Belongs to the AB hydrolase superfamily. AB hydrolase 2 family.

The protein resides in the cytoplasm. It is found in the cytosol. It carries out the reaction S-hexadecanoyl-L-cysteinyl-[protein] + H2O = L-cysteinyl-[protein] + hexadecanoate + H(+). In terms of biological role, palmitoyl thioesterase that catalyzes depalmitoylation of CGAS and KCNMA1. Acts as a regulator of innate immunity by mediating depalmitoylation of CGAS, thereby preventing CGAS homodimerization and cyclic GMP-AMP synthase activity. Does not exhibit phospholipase nor triacylglycerol lipase activity, able to hydrolyze only short chain substrates due to its shallow active site. This chain is Lysophospholipase-like protein 1, found in Pongo abelii (Sumatran orangutan).